The sequence spans 382 residues: Osmoprotectant import ATP-binding protein OsmV (382 aa).

In terms of domain architecture, ABC transporter spans 2 to 241 (IKLENLTKQF…PANEFVGSFV (240 aa)). ATP is bound at residue 39 to 46 (GPSGCGKT). 2 CBS domains span residues 258 to 320 (VTDQ…THPF) and 322 to 373 (ITGK…GRTR).

This sequence belongs to the ABC transporter superfamily. The complex is composed of two ATP-binding proteins (OsmV), two transmembrane proteins (OsmW and OsmY) and a solute-binding protein (OsmX).

It is found in the cell inner membrane. Functionally, part of the OsmU ABC transporter complex, which is involved in the uptake of osmoprotectants such as choline-O-sulfate and glycine betaine. Probably responsible for energy coupling to the transport system. In Salmonella typhimurium (strain LT2 / SGSC1412 / ATCC 700720), this protein is Osmoprotectant import ATP-binding protein OsmV (osmV).